A 190-amino-acid polypeptide reads, in one-letter code: MKLLEDKILKEGILLEGNILKVDSFLNHQMDVKLFNEIGKEFKRRFEGCNINKILTIEASGIGIATIVSQYFDFCPVVFAKKVDAANMDKDTYESKVHSFTKNKTYNVRVSKKYINKGDKILLIDDFLANGCAALGLIDIIKQGGAELAGVGIAIEKGFQKGRKELEKVGAKVESLAILDKIENDKVYFK.

Positions 20 and 27 each coordinate xanthine. Residue 129-133 participates in 5-phospho-alpha-D-ribose 1-diphosphate binding; the sequence is ANGCA. Lys157 serves as a coordination point for xanthine.

This sequence belongs to the purine/pyrimidine phosphoribosyltransferase family. Xpt subfamily. As to quaternary structure, homodimer.

It is found in the cytoplasm. The enzyme catalyses XMP + diphosphate = xanthine + 5-phospho-alpha-D-ribose 1-diphosphate. It functions in the pathway purine metabolism; XMP biosynthesis via salvage pathway; XMP from xanthine: step 1/1. Its function is as follows. Converts the preformed base xanthine, a product of nucleic acid breakdown, to xanthosine 5'-monophosphate (XMP), so it can be reused for RNA or DNA synthesis. The chain is Xanthine phosphoribosyltransferase 2 from Clostridium botulinum (strain Langeland / NCTC 10281 / Type F).